The following is a 543-amino-acid chain: Chaperonin GroEL 2 (543 aa).

ATP-binding positions include T29 to P32, D86 to T90, G413, N479 to A481, and D495.

This sequence belongs to the chaperonin (HSP60) family. Forms a cylinder of 14 subunits composed of two heptameric rings stacked back-to-back. Interacts with the co-chaperonin GroES.

Its subcellular location is the cytoplasm. It carries out the reaction ATP + H2O + a folded polypeptide = ADP + phosphate + an unfolded polypeptide.. In terms of biological role, together with its co-chaperonin GroES, plays an essential role in assisting protein folding. The GroEL-GroES system forms a nano-cage that allows encapsulation of the non-native substrate proteins and provides a physical environment optimized to promote and accelerate protein folding. The polypeptide is Chaperonin GroEL 2 (Synechococcus sp. (strain CC9311)).